Reading from the N-terminus, the 122-residue chain is Large ribosomal subunit protein uL14 (122 aa).

The protein belongs to the universal ribosomal protein uL14 family. Part of the 50S ribosomal subunit. Forms a cluster with proteins L3 and L19. In the 70S ribosome, L14 and L19 interact and together make contacts with the 16S rRNA in bridges B5 and B8.

In terms of biological role, binds to 23S rRNA. Forms part of two intersubunit bridges in the 70S ribosome. The protein is Large ribosomal subunit protein uL14 of Chlamydia caviae (strain ATCC VR-813 / DSM 19441 / 03DC25 / GPIC) (Chlamydophila caviae).